Reading from the N-terminus, the 138-residue chain is MSWSGLLHGLNTSLTCGPALVPRLWATCSMATLNQMHRLGPPKRPPRKLGPTEGRPQLKGVVLCTFTRKPKKPNSANRKCCRVRLSTGREAVCFIPGEGHTLQEHQIVLVEGGRTQDLPGVKLTVVRGKYDCGHVQKK.

The transit peptide at 1–29 (MSWSGLLHGLNTSLTCGPALVPRLWATCS) directs the protein to the mitochondrion. Residues 36 to 56 (MHRLGPPKRPPRKLGPTEGRP) form a disordered region.

The protein belongs to the universal ribosomal protein uS12 family. In terms of assembly, component of the mitochondrial small ribosomal subunit (mt-SSU). Mature mammalian 55S mitochondrial ribosomes consist of a small (28S) and a large (39S) subunit. The 28S small subunit contains a 12S ribosomal RNA (12S mt-rRNA) and 30 different proteins. The 39S large subunit contains a 16S rRNA (16S mt-rRNA), a copy of mitochondrial valine transfer RNA (mt-tRNA(Val)), which plays an integral structural role, and 52 different proteins.

The protein localises to the mitochondrion. The protein is Small ribosomal subunit protein uS12m (MRPS12) of Homo sapiens (Human).